Consider the following 320-residue polypeptide: Cytochrome f (320 aa).

Positions 1–35 (MQTRNTFFWIKEQMTRSISVSIIVYVITQTSISNA) are cleaved as a signal peptide. Heme-binding residues include tyrosine 36, cysteine 56, cysteine 59, and histidine 60. Residues 286–306 (VQGLLFFFASVILAQIFLVLK) form a helical membrane-spanning segment.

This sequence belongs to the cytochrome f family. The 4 large subunits of the cytochrome b6-f complex are cytochrome b6, subunit IV (17 kDa polypeptide, petD), cytochrome f and the Rieske protein, while the 4 small subunits are PetG, PetL, PetM and PetN. The complex functions as a dimer. The cofactor is heme.

The protein resides in the plastid. It localises to the chloroplast thylakoid membrane. Component of the cytochrome b6-f complex, which mediates electron transfer between photosystem II (PSII) and photosystem I (PSI), cyclic electron flow around PSI, and state transitions. The chain is Cytochrome f from Buxus microphylla (Littleleaf boxwood).